An 897-amino-acid chain; its full sequence is Molybdenum import ATP-binding protein ModC 2 (897 aa).

Positions 6-236 (RGRIDAAFRG…PALPLAYSRD (231 aa)) constitute an ABC transporter domain. An ATP-binding site is contributed by 38-45 (GPSGCGKT). The 71-residue stretch at 295–365 (ESSILNILPA…VKGVSLVRAS (71 aa)) folds into the Mop domain. The segment at 823–848 (LGDRSVLGPREPDAGAKGRKRQNDPE) is disordered. A compositionally biased stretch (basic and acidic residues) spans 832-848 (REPDAGAKGRKRQNDPE).

The protein belongs to the ABC transporter superfamily. Molybdate importer (TC 3.A.1.8) family. In terms of assembly, the complex is composed of two ATP-binding proteins (ModC), two transmembrane proteins (ModB) and a solute-binding protein (ModA).

The protein localises to the cell inner membrane. The enzyme catalyses molybdate(out) + ATP + H2O = molybdate(in) + ADP + phosphate + H(+). Part of the ABC transporter complex ModABC involved in molybdenum import. Responsible for energy coupling to the transport system. The sequence is that of Molybdenum import ATP-binding protein ModC 2 from Bradyrhizobium diazoefficiens (strain JCM 10833 / BCRC 13528 / IAM 13628 / NBRC 14792 / USDA 110).